A 125-amino-acid chain; its full sequence is Large ribosomal subunit protein bL12 (125 aa).

This sequence belongs to the bacterial ribosomal protein bL12 family. Homodimer. Part of the ribosomal stalk of the 50S ribosomal subunit. Forms a multimeric L10(L12)X complex, where L10 forms an elongated spine to which 2 to 4 L12 dimers bind in a sequential fashion. Binds GTP-bound translation factors.

Forms part of the ribosomal stalk which helps the ribosome interact with GTP-bound translation factors. Is thus essential for accurate translation. In Bradyrhizobium sp. (strain BTAi1 / ATCC BAA-1182), this protein is Large ribosomal subunit protein bL12.